We begin with the raw amino-acid sequence, 213 residues long: Small ribosomal subunit protein uS3c (213 aa).

Positions 39–109 (IRKYLNAKLA…KFRITITYLQ (71 aa)) constitute a KH type-2 domain.

Belongs to the universal ribosomal protein uS3 family. Part of the 30S ribosomal subunit.

The protein localises to the plastid. It is found in the chloroplast. In Mesostigma viride (Green alga), this protein is Small ribosomal subunit protein uS3c (rps3).